Consider the following 92-residue polypeptide: Putative pterin-4-alpha-carbinolamine dehydratase 2 (92 aa).

This sequence belongs to the pterin-4-alpha-carbinolamine dehydratase family.

The catalysed reaction is (4aS,6R)-4a-hydroxy-L-erythro-5,6,7,8-tetrahydrobiopterin = (6R)-L-erythro-6,7-dihydrobiopterin + H2O. This Gloeobacter violaceus (strain ATCC 29082 / PCC 7421) protein is Putative pterin-4-alpha-carbinolamine dehydratase 2.